The sequence spans 410 residues: Histidine--tRNA ligase (410 aa).

Belongs to the class-II aminoacyl-tRNA synthetase family. As to quaternary structure, homodimer.

It is found in the cytoplasm. The catalysed reaction is tRNA(His) + L-histidine + ATP = L-histidyl-tRNA(His) + AMP + diphosphate + H(+). This chain is Histidine--tRNA ligase, found in Campylobacter hominis (strain ATCC BAA-381 / DSM 21671 / CCUG 45161 / LMG 19568 / NCTC 13146 / CH001A).